Here is a 449-residue protein sequence, read N- to C-terminus: LFQLELKNIPKSFTRLAQRFGPVFTLYVGSRRVVVVHGIKAVKEVLPGPQGRVLGQRRHPAFHAHRDRGIIFNNGPTWKDIRRFSLTTLRNYGMGKQGNESRIQREAHFLLEALRKTQGQPFDPTFLIGCAPCNVIADILFRKRFDYNDEKFLRLMYLFNENFQGLSCPWLQLYNNFPSLLHYLPGSHRKVMKNVAEIKEYVSERVKEHHQSLDPNCPRDLTDCLLVEMEKEKHSAERLYTMDGITVTVADLFFAGTETTSTTLRYGLLILMKYPEIEEKLHEEIDRVIGPSRIPAIKDRQEMPYMHAVVHEIQRFITLVPSNLPHEATRDTIFRGYIIPKGTVIVPTLDSVLYHNQEFPDPEKFKPEHLVDESGKFKYSDYFKPFSAGKRVCAGEGLARMELFLLLSAILQHFNLKPLVDPKDIDISPVNIGFGCIPPRFKLCVIPRS.

Position 254-259 (254-259) interacts with substrate; the sequence is FAGTET. Residue Cys-393 participates in heme binding.

Belongs to the cytochrome P450 family. As to quaternary structure, interacts with chaperones HSP70 and HSP90; this interaction is required for initial targeting to mitochondria. Requires heme as cofactor.

Its subcellular location is the endoplasmic reticulum membrane. The protein resides in the microsome membrane. It is found in the mitochondrion inner membrane. The catalysed reaction is an organic molecule + reduced [NADPH--hemoprotein reductase] + O2 = an alcohol + oxidized [NADPH--hemoprotein reductase] + H2O + H(+). It catalyses the reaction (5Z,8Z,11Z)-eicosatrienoate + reduced [NADPH--hemoprotein reductase] + O2 = 19-hydroxy-(5Z,8Z,11Z)-eicosatrienoate + oxidized [NADPH--hemoprotein reductase] + H2O + H(+). The enzyme catalyses (5Z,8Z,11Z,14Z,17Z)-eicosapentaenoate + reduced [NADPH--hemoprotein reductase] + O2 = 19-hydroxy-(5Z,8Z,11Z,14Z,17Z)-eicosapentaenoate + oxidized [NADPH--hemoprotein reductase] + H2O + H(+). It carries out the reaction (4Z,7Z,10Z,13Z,16Z,19Z)-docosahexaenoate + reduced [NADPH--hemoprotein reductase] + O2 = 21-hydroxy-(4Z,7Z,10Z,13Z,16Z,19Z)-docosahexaenoate + oxidized [NADPH--hemoprotein reductase] + H2O + H(+). The catalysed reaction is dodecanoate + reduced [NADPH--hemoprotein reductase] + O2 = 11-hydroxydodecanoate + oxidized [NADPH--hemoprotein reductase] + H2O + H(+). It catalyses the reaction tetradecanoate + reduced [NADPH--hemoprotein reductase] + O2 = 13-hydroxytetradecanoate + oxidized [NADPH--hemoprotein reductase] + H2O + H(+). The enzyme catalyses 4-nitrophenol + NADPH + O2 + H(+) = 4-nitrocatechol + NADP(+) + H2O. The protein operates within lipid metabolism; fatty acid metabolism. With respect to regulation, the omega-1 hydroxylase activity is stimulated by cytochrome b5. In terms of biological role, a cytochrome P450 monooxygenase involved in the metabolism of fatty acids. Mechanistically, uses molecular oxygen inserting one oxygen atom into a substrate, and reducing the second into a water molecule, with two electrons provided by NADPH via cytochrome P450 reductase (NADPH--hemoprotein reductase). Catalyzes the hydroxylation of carbon-hydrogen bonds. Hydroxylates fatty acids specifically at the omega-1 position displaying the highest catalytic activity for saturated fatty acids. May be involved in the oxidative metabolism of xenobiotics. This chain is Cytochrome P450 2E1 (CYP2E1), found in Macaca fascicularis (Crab-eating macaque).